Reading from the N-terminus, the 437-residue chain is UDP-N-acetylmuramoylalanine--D-glutamate ligase (437 aa).

Position 112-118 (112-118 (GSNGKST)) interacts with ATP.

This sequence belongs to the MurCDEF family.

The protein resides in the cytoplasm. The catalysed reaction is UDP-N-acetyl-alpha-D-muramoyl-L-alanine + D-glutamate + ATP = UDP-N-acetyl-alpha-D-muramoyl-L-alanyl-D-glutamate + ADP + phosphate + H(+). Its pathway is cell wall biogenesis; peptidoglycan biosynthesis. Cell wall formation. Catalyzes the addition of glutamate to the nucleotide precursor UDP-N-acetylmuramoyl-L-alanine (UMA). The sequence is that of UDP-N-acetylmuramoylalanine--D-glutamate ligase from Haemophilus influenzae (strain PittEE).